Consider the following 710-residue polypeptide: Bifunctional sesterterpene synthase (710 aa).

Residues M1–E327 form a stellata-2,6,19-trien synthase region. Mg(2+) contacts are provided by D92 and D96. Substrate contacts are provided by residues D92, D96, R181–D184, and S229–E233. The short motif at D92 to D96 is the DDXXD motif 1 element. An NSE motif motif is present at residues Y278–K286. Substrate is bound at residue R318 to Y319. Residues R328 to N709 form a geranylgeranyl diphosphate synthase region. Residues H365 to G404 form a disordered region. The span at V368–T380 shows a compositional bias: polar residues. The isopentenyl diphosphate site is built by K430, R433, and H462. Positions 469 and 473 each coordinate Mg(2+). Positions D469–D473 match the DDXXD motif 2 motif. R478 is a dimethylallyl diphosphate binding site. R479 contacts isopentenyl diphosphate. Positions 556, 557, 592, 599, 609, and 619 each coordinate dimethylallyl diphosphate.

This sequence in the C-terminal section; belongs to the FPP/GGPP synthase family. In the N-terminal section; belongs to the terpene synthase family. Hexamer.

The catalysed reaction is 4 isopentenyl diphosphate + dimethylallyl diphosphate = (2E,6E,10E,14E)-geranylfarnesyl diphosphate + 4 diphosphate. It carries out the reaction (2E,6E,10E,14E)-geranylfarnesyl diphosphate = variecoladiene + diphosphate. It functions in the pathway secondary metabolite biosynthesis; terpenoid biosynthesis. Its function is as follows. Multifunctional sesterterpene synthase; part of the gene cluster that mediates the biosynthesis of the sesterterpene variecolin. The first step in the pathway is performed by the variecoladiene synthase vrcA that possesses both prenyl transferase and terpene cyclase activity, converting isopentenyl diphosphate and dimethylallyl diphosphate into geranylfarnesyl pyrophosphate (GFPP) and then converting GFPP into the tetracyclic variecoladiene. The cytochrome P450 monooxygenase vrcB then catalyzes multiple oxidations at C-5 and C-20 positions to yield variecolin. In Aspergillus aculeatus (strain ATCC 16872 / CBS 172.66 / WB 5094), this protein is Bifunctional sesterterpene synthase.